The sequence spans 366 residues: Phospho-N-acetylmuramoyl-pentapeptide-transferase (366 aa).

The next 10 membrane-spanning stretches (helical) occupy residues 27 to 47, 71 to 91, 93 to 113, 134 to 154, 174 to 194, 205 to 225, 245 to 265, 268 to 288, 297 to 317, and 343 to 363; these read AALFTSALIVFLFGPAIISSL, TPTMGGLMILAGIVGSALLWA, LSSIYVVSTLLVTLGFGAIGF, LGIEFVIAAIAVFFMMQAAQS, LMLNLGYFFVLFGGFVIVGAG, GLAIVPVMIASAAFGLIAYLA, LAVILGAVIGAGLGFLWFNAP, AIFMGDTGSLALGGLIGTVAV, VIIGGLFVIETLSVIIQVFWF, and QVVIRFWIIAVILAMVGLSTL.

Belongs to the glycosyltransferase 4 family. MraY subfamily. It depends on Mg(2+) as a cofactor.

It is found in the cell inner membrane. The catalysed reaction is UDP-N-acetyl-alpha-D-muramoyl-L-alanyl-gamma-D-glutamyl-meso-2,6-diaminopimeloyl-D-alanyl-D-alanine + di-trans,octa-cis-undecaprenyl phosphate = di-trans,octa-cis-undecaprenyl diphospho-N-acetyl-alpha-D-muramoyl-L-alanyl-D-glutamyl-meso-2,6-diaminopimeloyl-D-alanyl-D-alanine + UMP. Its pathway is cell wall biogenesis; peptidoglycan biosynthesis. In terms of biological role, catalyzes the initial step of the lipid cycle reactions in the biosynthesis of the cell wall peptidoglycan: transfers peptidoglycan precursor phospho-MurNAc-pentapeptide from UDP-MurNAc-pentapeptide onto the lipid carrier undecaprenyl phosphate, yielding undecaprenyl-pyrophosphoryl-MurNAc-pentapeptide, known as lipid I. This Sinorhizobium fredii (strain NBRC 101917 / NGR234) protein is Phospho-N-acetylmuramoyl-pentapeptide-transferase.